We begin with the raw amino-acid sequence, 925 residues long: ETO1-like protein 2 (925 aa).

The 101-residue stretch at 207-307 folds into the BTB domain; sequence SDISFCVGSE…ECEARLAASV (101 aa). A TPR 1 repeat occupies 409 to 442; sequence ALSLHQMGCVLFERKDYKAAQFHFRLASSLGHVY. A coiled-coil region spans residues 509-533; sequence KYRAVMKFEQKQIKEAFQEIDRLIQ. TPR repeat units follow at residues 538–571, 664–697, 738–771, 773–803, 834–867, and 869–900; these read PECLELRAWLYLATGDRESCLRDLRAVLSLEPNY, AERLVYEGWLLYDMGYVEETLTKAEEAISIQRSF, GQALNNLGSIYINLGMLDQAETAYKNAIEIKHIR, RQGLARVYFLKNQRKEACEEMTKLIEKSCSK, TYPYRYRAAVLMDDQRETEAVEELSKAIAFRPEL, and TLHLRAAFHEATGNLSLATQDCEAALCLDPNH.

The protein belongs to the ETO1 family. In terms of assembly, interacts with the C-terminal domain of ACS5. As to expression, constitutively expressed in green and etiolated seedlings.

The protein operates within protein modification; protein ubiquitination. Functionally, potential regulator of the ethylene pathway, which acts by regulating the stability of 1-aminocyclopropane-1-carboxylate synthase (ACS) enzymes. May act as a substrate-specific adapter that connects ACS enzymes, such as ACS5, to ubiquitin ligase complexes, leading to proteasomal degradation of ACS enzymes. This Arabidopsis thaliana (Mouse-ear cress) protein is ETO1-like protein 2 (EOL2).